The primary structure comprises 237 residues: Ribosomal RNA small subunit methyltransferase G (237 aa).

S-adenosyl-L-methionine-binding positions include Gly-78, Phe-83, 129–130 (AE), and Arg-148.

Belongs to the methyltransferase superfamily. RNA methyltransferase RsmG family.

The protein resides in the cytoplasm. Its function is as follows. Specifically methylates the N7 position of a guanine in 16S rRNA. The polypeptide is Ribosomal RNA small subunit methyltransferase G (Streptococcus pyogenes serotype M6 (strain ATCC BAA-946 / MGAS10394)).